The following is a 515-amino-acid chain: Cytochrome P450 monooxygenase mfmA (515 aa).

A helical transmembrane segment spans residues 3–23 (KISIIPIVGVALSLAIILQLG). Heme is bound at residue cysteine 453.

Belongs to the cytochrome P450 family. Heme is required as a cofactor.

It localises to the membrane. It functions in the pathway secondary metabolite biosynthesis; terpenoid biosynthesis. Cytochrome P450 monooxygenase; part of the gene cluster that mediates the biosynthesis of the phthalide-terpenoid hybrid 11'-O-desmethylfendlerol. Within the pathway, mfma and mfmC act together to convert 3,5-dimethylorsellinic acid (DMOA) into the phthalide 5,7-dihydroxy-4-(hydroxymethyl)-6-methylphthalide. MfmA performs especially an hydroxylation at C-9. The biosynthesis of 11'-O-desmethylfendlerol begins with the NR-PKS mfmB that forms 3,5-dimethylorsellinic acid (DMOA), which is then transformed into the phthalide 5,7-dihydroxy-4-(hydroxymethyl)-6-methylphthalide by the cytochrome P450 monooxygenase mfmA and the hydrolase mfmC. Subsequently, the methyltransferase mfmE catalyzes 7-O-methylation to yield 5-hydroxy-4-(hydroxymethyl)-7-methoxy-6-methylphthalide, which undergoes C-3 hydroxylation by the cytochrome P450 monooxygenase mfmF. The resultant cyclopolic acid (2,5-dihydroxy-4-(hydroxymethyl)-7-methoxy-6-methylphthalide) is then farnesylated by the DMATS-type prenyltransferase mfmD to afford 5-O-farnesylcyclopolic acid. Finally, the Pyr4-family terpene cyclase mfmH cyclizes the farnesyl moiety of 5-O-farnesylcyclopolic acid into a drimane-like structure, thus completing the biosynthesis of 11'-O-desmethylfendlerol. This is Cytochrome P450 monooxygenase mfmA from Annulohypoxylon moriforme (Filamentous fungus).